Reading from the N-terminus, the 97-residue chain is MMLEQLIQLKQDLIDGSKVEKPSLDDKQIDEMDILVSEALEFNKELKFKLFNKGFVENVTGRVHYINFEQQKLHVKDQNDNTVYINMNNIIRVIYND.

This is an uncharacterized protein from Bacillus subtilis (strain 168).